We begin with the raw amino-acid sequence, 350 residues long: Succinylglutamate desuccinylase (350 aa).

Residues H71, E74, and H169 each contribute to the Zn(2+) site. The active site involves E233.

The protein belongs to the AspA/AstE family. Succinylglutamate desuccinylase subfamily. It depends on Zn(2+) as a cofactor.

It carries out the reaction N-succinyl-L-glutamate + H2O = L-glutamate + succinate. It participates in amino-acid degradation; L-arginine degradation via AST pathway; L-glutamate and succinate from L-arginine: step 5/5. Its function is as follows. Transforms N(2)-succinylglutamate into succinate and glutamate. This chain is Succinylglutamate desuccinylase, found in Pseudoalteromonas atlantica (strain T6c / ATCC BAA-1087).